The primary structure comprises 258 residues: Snake venom serine proteinase 8 (258 aa).

Positions 1 to 18 are cleaved as a signal peptide; that stretch reads MVLIRVLANLLILQLSYA. Residues 19 to 24 constitute a propeptide that is removed on maturation; it reads QKSSEL. One can recognise a Peptidase S1 domain in the interval 25–249; the sequence is VIGGDECNIN…YNDWIQSIIA (225 aa). Cystine bridges form between cysteine 31-cysteine 163, cysteine 50-cysteine 66, cysteine 98-cysteine 256, cysteine 142-cysteine 210, cysteine 174-cysteine 189, and cysteine 200-cysteine 225. The N-linked (GlcNAc...) asparagine glycan is linked to asparagine 44. Residues histidine 65 and aspartate 110 each act as charge relay system in the active site. The active-site Charge relay system is serine 204.

It belongs to the peptidase S1 family. Snake venom subfamily. As to quaternary structure, monomer. In terms of tissue distribution, expressed by the venom gland.

It localises to the secreted. Its function is as follows. Snake venom serine protease that may act in the hemostasis system of the prey. This is Snake venom serine proteinase 8 from Crotalus adamanteus (Eastern diamondback rattlesnake).